The primary structure comprises 483 residues: ATP synthase subunit beta (483 aa).

169 to 176 (GGAGVGKT) contacts ATP.

This sequence belongs to the ATPase alpha/beta chains family. In terms of assembly, F-type ATPases have 2 components, CF(1) - the catalytic core - and CF(0) - the membrane proton channel. CF(1) has five subunits: alpha(3), beta(3), gamma(1), delta(1), epsilon(1). CF(0) has three main subunits: a(1), b(2) and c(9-12). The alpha and beta chains form an alternating ring which encloses part of the gamma chain. CF(1) is attached to CF(0) by a central stalk formed by the gamma and epsilon chains, while a peripheral stalk is formed by the delta and b chains.

The protein resides in the cell membrane. The enzyme catalyses ATP + H2O + 4 H(+)(in) = ADP + phosphate + 5 H(+)(out). In terms of biological role, produces ATP from ADP in the presence of a proton gradient across the membrane. The catalytic sites are hosted primarily by the beta subunits. The protein is ATP synthase subunit beta of Corynebacterium glutamicum (strain ATCC 13032 / DSM 20300 / JCM 1318 / BCRC 11384 / CCUG 27702 / LMG 3730 / NBRC 12168 / NCIMB 10025 / NRRL B-2784 / 534).